The chain runs to 581 residues: uncharacterized protein (581 aa).

The signal sequence occupies residues 1-28; the sequence is MDSKAVSPLIGFVLMLAIIMGLIGIMQA.

This is an uncharacterized protein from Archaeoglobus fulgidus (strain ATCC 49558 / DSM 4304 / JCM 9628 / NBRC 100126 / VC-16).